Reading from the N-terminus, the 3073-residue chain is Adhesion G-protein coupled receptor G4 (3073 aa).

Positions 1 to 25 are cleaved as a signal peptide; sequence MRKHILHQRLCGLILVSSFIFLTDS. The Extracellular segment spans residues 26 to 2691; sequence LSLKGKRLDF…RSTVDAVNER (2666 aa). The Pentraxin (PTX) domain occupies 29 to 228; it reads KGKRLDFYGE…SPTVDRRLRC (200 aa). 2 cysteine pairs are disulfide-bonded: C58-C123 and C200-C228. N233 carries N-linked (GlcNAc...) asparagine glycosylation. Residues 253-272 form a disordered region; sequence SQTTGLNPHKTSHSSTLLPE. N662 carries an N-linked (GlcNAc...) asparagine glycan. Composition is skewed to polar residues over residues 671-696 and 929-951; these read GNAT…ESKV and GNSA…SSST. 2 disordered regions span residues 671-697 and 924-951; these read GNAT…SKVT and SEKS…SSST. N-linked (GlcNAc...) asparagine glycans are attached at residues N1141, N1304, and N1495. Disordered regions lie at residues 1565-1595, 1741-1760, and 1945-1972; these read FTSS…AGPT, TLTN…STPT, and ITLS…SDSR. Residues 1945–1954 are compositionally biased toward polar residues; the sequence is ITLSSNPSVN. Over residues 1955–1972 the composition is skewed to low complexity; the sequence is SRATSPTWSSSSLPSDSR. One can recognise a GAIN-B domain in the interval 2535-2684; sequence SSEEVIAPQI…GVLMDLSRST (150 aa). 2 disulfides stabilise this stretch: C2635-C2666 and C2654-C2668. The tract at residues 2635 to 2684 is GPS; that stretch reads CAFWDFDTNNGLGGWNPSGCKLKESNINYTICQCNHLTHFGVLMDLSRST. The stachel stretch occupies residues 2673–2684; the sequence is HFGVLMDLSRST. The helical transmembrane segment at 2692–2712 threads the bilayer; sequence ILVIITYTGCGISSIFLGIAM. Over 2713-2728 the chain is Cytoplasmic; the sequence is VTYIAFHKLRKDYPSK. A helical transmembrane segment spans residues 2729–2749; that stretch reads ILINLCTALLMLNLAFLVNSW. Over 2750-2755 the chain is Extracellular; that stretch reads LTSFQK. The chain crosses the membrane as a helical span at residues 2756-2776; it reads VGLCITAAVALHYFLLVSLTW. A disulfide bridge connects residues C2759 and C2836. At 2777-2798 the chain is on the cytoplasmic side; that stretch reads MGLEAVHMYFALVKVFNTYIPN. Residues 2799-2819 traverse the membrane as a helical segment; that stretch reads YILKFCLAGWGIPAITVAIIL. Topologically, residues 2820 to 2842 are extracellular; sequence SVRKDLYGTLSPTTPFCWIKDDH. The helical transmembrane segment at 2843-2863 threads the bilayer; that stretch reads IFYISVVAYFCLIFLMNLSMF. The Cytoplasmic segment spans residues 2864–2892; the sequence is CTVLVQLTSVKSQSQKTRKKMILNDLKGT. Residues 2893-2913 traverse the membrane as a helical segment; it reads ISLTFLLGLTWGFAFFAWGPV. Position 2914 (R2914) is a topological domain, extracellular. The chain crosses the membrane as a helical span at residues 2915–2935; it reads IFFLYLFAICNTLQGFLIFVF. Residues 2936–3073 lie on the Cytoplasmic side of the membrane; that stretch reads YCVMKESVRE…SSGLGEMFNL (138 aa).

This sequence belongs to the G-protein coupled receptor 2 family. Adhesion G-protein coupled receptor (ADGR) subfamily. As to quaternary structure, homodimer; homodimerizes via its Pentraxin domain in a calcium-independent manner. Heterodimer of 2 chains generated by proteolytic processing; the large extracellular N-terminal fragment and the membrane-bound C-terminal fragment predominantly remain associated and non-covalently linked. Post-translationally, autoproteolytically processed at the GPS region of the GAIN-B domain; this cleavage modulates receptor activity.

The protein localises to the membrane. Forms a heterodimer of 2 chains generated by proteolytic processing that remain associated through non-covalent interactions mediated by the GAIN-B domain. In the inactivated receptor, the Stachel sequence (also named stalk) is embedded in the GAIN-B domain, where it adopts a beta-strand conformation. On activation, the Stachel moves into the 7 transmembrane region and adopts a twisted hook-shaped configuration that forms contacts within the receptor, leading to coupling of a G-alpha protein, which activates signaling. The cleaved GAIN-B and N-terminal domains can then dissociate from the rest of the receptor. Orphan adhesion G-protein coupled receptor (aGPCR). Ligand binding causes a conformation change that triggers signaling via guanine nucleotide-binding proteins (G proteins) and modulates the activity of downstream effectors, such as adenylate cyclase. ADGRG4 is coupled to G(s) G proteins and mediates activation of adenylate cyclase activity. May be act as sensor of mechanical forces. The polypeptide is Adhesion G-protein coupled receptor G4 (Mus musculus (Mouse)).